A 507-amino-acid polypeptide reads, in one-letter code: FSD1-like protein (507 aa).

Positions 70-109 (KQEQVRKSQELQSQLSQCNNALENSEELLEFATRSLDIKE) form a coiled coil. Residues 105 to 162 (LDIKEPEEFSKAARQIKDRVTMASAFRLSLKPKVSDNMTHLMVDFSQERQMLQTLKFL) form the COS domain. In terms of domain architecture, Fibronectin type-III spans 164-268 (VPKAPEIDPV…DPVTLETRAL (105 aa)). One can recognise a B30.2/SPRY domain in the interval 291 to 484 (DPTGGKGQES…LSTGMQVPSA (194 aa)). The segment at 292–345 (PTGGKGQESKIKGKENKGSVHVTSLKKHTSGTPSPKRTSVGSRPPAVRGSRDRF) is disordered. The segment covering 298-309 (QESKIKGKENKG) has biased composition (basic and acidic residues). Polar residues predominate over residues 321-332 (SGTPSPKRTSVG). A phosphoserine mark is found at Ser-498 and Ser-501.

This Mus musculus (Mouse) protein is FSD1-like protein (Fsd1l).